Reading from the N-terminus, the 145-residue chain is tRNA-specific adenosine deaminase (145 aa).

The region spanning 1–116 (MREALKQAEI…SNLRYFNSKA (116 aa)) is the CMP/dCMP-type deaminase domain. His48 serves as a coordination point for Zn(2+). The active-site Proton donor is the Glu50. 2 residues coordinate Zn(2+): Cys78 and Cys81.

The protein belongs to the cytidine and deoxycytidylate deaminase family. In terms of assembly, homodimer. The cofactor is Zn(2+).

It catalyses the reaction adenosine(34) in tRNA + H2O + H(+) = inosine(34) in tRNA + NH4(+). In terms of biological role, catalyzes the deamination of adenosine to inosine at the wobble position 34 of tRNA(Arg2). This is tRNA-specific adenosine deaminase from Rickettsia bellii (strain RML369-C).